Here is a 158-residue protein sequence, read N- to C-terminus: Disease resistance response protein DRRG49-C (158 aa).

Belongs to the BetVI family.

This Pisum sativum (Garden pea) protein is Disease resistance response protein DRRG49-C.